The chain runs to 60 residues: Large ribosomal subunit protein bL32 (60 aa).

The disordered stretch occupies residues 1-60; sequence MAVQQNKKSRSARDMRRSHDALEPNALSVEKSTGEVHLRHHVSPDGFYRGRKVIDKGADE. Residues 11 to 22 are compositionally biased toward basic and acidic residues; that stretch reads SARDMRRSHDAL.

The protein belongs to the bacterial ribosomal protein bL32 family.

This Stutzerimonas stutzeri (strain A1501) (Pseudomonas stutzeri) protein is Large ribosomal subunit protein bL32.